Consider the following 172-residue polypeptide: MHAGRKTAVLIGAALAPVIAVSLPAASASAHGYISNPPSRQAQCAAGTVSCGDITYEPQSVEGPKGLTSCSGGNSRFAELDDDSKGWAVTPVPRNATFSWKLTAQHSTSTWEYYVGGQRIALFDDGGAKPGAVVDHQVDFGGLDGRQKVLAVWNVADTDNAFYACIDVNVGG.

The first 30 residues, 1-30 (MHAGRKTAVLIGAALAPVIAVSLPAASASA), serve as a signal peptide directing secretion. Residues histidine 31 and histidine 106 each coordinate Cu cation. A Chitin-binding type-4 domain is found at 31-168 (HGYISNPPSR…DNAFYACIDV (138 aa)).

Cu(2+) is required as a cofactor.

It is found in the secreted. The catalysed reaction is [(1-&gt;4)-N-acetyl-beta-D-glucosaminyl]n+m + reduced acceptor + O2 = [(1-&gt;4)-N-acetyl-beta-D-glucosaminyl]m-1-(1-&gt;4)-2-(acetylamino)-2-deoxy-D-glucono-1,5-lactone + [(1-&gt;4)-N-acetyl-beta-D-glucosaminyl]n + acceptor + H2O.. Its pathway is glycan degradation; chitin degradation. Its function is as follows. Involved in chitin degradation. Catalyzes the oxidative cleavage of glycosidic bonds in chitin via a copper-dependent mechanism, leading to oxidized chitooligomers with degrees of polymerization of 4-6. Is not active on cellulose. This Streptomyces ambofaciens (strain ATCC 23877 / 3486 / DSM 40053 / JCM 4204 / NBRC 12836 / NRRL B-2516) protein is Lytic chitin monooxygenase.